The sequence spans 457 residues: Casein kinase 1-like protein 11 (457 aa).

In terms of domain architecture, Protein kinase spans 15–284 (FKLGRKLGSG…LRRLFRDLFI (270 aa)). ATP-binding positions include 21 to 29 (LGSGSFGEL) and Lys-44. Asp-134 (proton acceptor) is an active-site residue. 2 disordered regions span residues 305-337 (GSSS…GQDL) and 352-442 (NVSS…EDAI). Positions 311-324 (RPTPRPALDPPGPP) are enriched in pro residues. 2 stretches are compositionally biased toward polar residues: residues 383–403 (NGST…SAEP) and 409–429 (SRLF…QSYE).

It belongs to the protein kinase superfamily. CK1 Ser/Thr protein kinase family. Casein kinase I subfamily. In terms of assembly, monomer. In terms of processing, autophosphorylated.

The protein localises to the cytoplasm. It is found in the nucleus. The catalysed reaction is L-seryl-[protein] + ATP = O-phospho-L-seryl-[protein] + ADP + H(+). The enzyme catalyses L-threonyl-[protein] + ATP = O-phospho-L-threonyl-[protein] + ADP + H(+). Its activity is regulated as follows. Partially inhibited by N-(2-aminoethyl)-5-chloroisoquinoline-8-sulfonamide (CKI-7). Functionally, casein kinases are operationally defined by their preferential utilization of acidic proteins such as caseins as substrates. Can phosphorylate casein, phosvitin, myosin light chains and poly(Glu,Tyr) in vitro. The sequence is that of Casein kinase 1-like protein 11 from Arabidopsis thaliana (Mouse-ear cress).